Consider the following 547-residue polypeptide: Chaperonin GroEL 1 (547 aa).

Residues 30 to 33 (TLGP), Lys51, 87 to 91 (DGTTT), Gly415, and Asp496 each bind ATP.

The protein belongs to the chaperonin (HSP60) family. As to quaternary structure, forms a cylinder of 14 subunits composed of two heptameric rings stacked back-to-back. Interacts with the co-chaperonin GroES.

Its subcellular location is the cytoplasm. It carries out the reaction ATP + H2O + a folded polypeptide = ADP + phosphate + an unfolded polypeptide.. Functionally, together with its co-chaperonin GroES, plays an essential role in assisting protein folding. The GroEL-GroES system forms a nano-cage that allows encapsulation of the non-native substrate proteins and provides a physical environment optimized to promote and accelerate protein folding. The chain is Chaperonin GroEL 1 from Rhodopseudomonas palustris (strain BisB5).